Here is a 395-residue protein sequence, read N- to C-terminus: ATP phosphoribosyltransferase regulatory subunit (395 aa).

It belongs to the class-II aminoacyl-tRNA synthetase family. HisZ subfamily. Heteromultimer composed of HisG and HisZ subunits.

The protein localises to the cytoplasm. It participates in amino-acid biosynthesis; L-histidine biosynthesis; L-histidine from 5-phospho-alpha-D-ribose 1-diphosphate: step 1/9. Functionally, required for the first step of histidine biosynthesis. May allow the feedback regulation of ATP phosphoribosyltransferase activity by histidine. The polypeptide is ATP phosphoribosyltransferase regulatory subunit (Pseudomonas savastanoi pv. phaseolicola (strain 1448A / Race 6) (Pseudomonas syringae pv. phaseolicola (strain 1448A / Race 6))).